The primary structure comprises 713 residues: Metal transporter CNNM3 (713 aa).

Residues 7-29 form a helical membrane-spanning segment; the sequence is AVVGWLGWVLAAFCLGSTAGEAA. A glycan (N-linked (GlcNAc...) asparagine) is linked at Asn-73. Residues 136-314 enclose the CNNM transmembrane domain; sequence EAAPPWALGL…DPYSDLSKGV (179 aa). 4 helical membrane passes run 137 to 157, 199 to 219, 227 to 247, and 267 to 287; these read AAPPWALGLGAAGLLALAAVA, CALGALLLLASLAQAALAVLL, AVPAVLGCAGLVFLVGEVLPA, and LAVLLTLPVALPVGQLLELAA. CBS domains lie at 324–385 and 392–458; these read LTPL…CTPL and YNHP…ILDE. The tract at residues 664 to 713 is disordered; it reads LPPSPENAELQAIPGSQTRLLGDKSRETAGSTNSRPSIPVEESPGRNPGV. Phosphoserine is present on residues Ser-667 and Ser-706.

It belongs to the ACDP family. Widely expressed with highest levels in brain, kidney, liver, lung and heart.

The protein localises to the cell membrane. In terms of biological role, probable metal transporter. The chain is Metal transporter CNNM3 (Cnnm3) from Mus musculus (Mouse).